The chain runs to 299 residues: tRNA dimethylallyltransferase (299 aa).

13–20 serves as a coordination point for ATP; sequence GPTASGKT. Residue 15–20 coordinates substrate; that stretch reads TASGKT. The interval 38–41 is interaction with substrate tRNA; that stretch reads DSRQ.

It belongs to the IPP transferase family. In terms of assembly, monomer. The cofactor is Mg(2+).

It catalyses the reaction adenosine(37) in tRNA + dimethylallyl diphosphate = N(6)-dimethylallyladenosine(37) in tRNA + diphosphate. Catalyzes the transfer of a dimethylallyl group onto the adenine at position 37 in tRNAs that read codons beginning with uridine, leading to the formation of N6-(dimethylallyl)adenosine (i(6)A). In Synechococcus sp. (strain CC9605), this protein is tRNA dimethylallyltransferase.